Consider the following 1830-residue polypeptide: Urea amidolyase (1830 aa).

ATP-binding positions include 115 to 122 (GAIVIGKT), Lys740, Glu823, and Asn858. A Biotin carboxylation domain is found at 625-1068 (PFETVLIANR…ATKILDSYDY (444 aa)). The 198-residue stretch at 744–941 (REIAEKAGVP…LVEWMLRIAA (198 aa)) folds into the ATP-grasp domain. Positions 1752–1830 (AVEEEYPEDA…DAGDLVAVIQ (79 aa)) constitute a Biotinyl-binding domain. An N6-biotinyllysine modification is found at Lys1796.

It belongs to the DUR1,2 family. Monomer. It depends on biotin as a cofactor.

It carries out the reaction urea + hydrogencarbonate + ATP = urea-1-carboxylate + ADP + phosphate + H(+). The catalysed reaction is urea-1-carboxylate + H2O + 3 H(+) = 2 NH4(+) + 2 CO2. Its pathway is nitrogen metabolism; urea degradation; CO(2) and NH(3) from urea (allophanate route): step 1/2. It participates in nitrogen metabolism; urea degradation; CO(2) and NH(3) from urea (allophanate route): step 2/2. In terms of biological role, involved in uracil catabolism. Hydrolysis of urea to ammonia and CO(2). The protein is Urea amidolyase (DUR1,2) of Lachancea kluyveri (Yeast).